Reading from the N-terminus, the 221-residue chain is Phosphoenolpyruvate guanylyltransferase (221 aa).

The phosphoenolpyruvate site is built by threonine 154, glycine 169, and serine 172.

It belongs to the CofC family.

It carries out the reaction phosphoenolpyruvate + GTP + H(+) = enolpyruvoyl-2-diphospho-5'-guanosine + diphosphate. It participates in cofactor biosynthesis; coenzyme F420 biosynthesis. Functionally, guanylyltransferase that catalyzes the activation of phosphoenolpyruvate (PEP) as enolpyruvoyl-2-diphospho-5'-guanosine, via the condensation of PEP with GTP. It is involved in the biosynthesis of coenzyme F420, a hydride carrier cofactor. This Mycolicibacterium smegmatis (strain ATCC 700084 / mc(2)155) (Mycobacterium smegmatis) protein is Phosphoenolpyruvate guanylyltransferase.